Here is a 94-residue protein sequence, read N- to C-terminus: Putative pterin-4-alpha-carbinolamine dehydratase (94 aa).

This sequence belongs to the pterin-4-alpha-carbinolamine dehydratase family.

The catalysed reaction is (4aS,6R)-4a-hydroxy-L-erythro-5,6,7,8-tetrahydrobiopterin = (6R)-L-erythro-6,7-dihydrobiopterin + H2O. The sequence is that of Putative pterin-4-alpha-carbinolamine dehydratase from Mycobacteroides abscessus (strain ATCC 19977 / DSM 44196 / CCUG 20993 / CIP 104536 / JCM 13569 / NCTC 13031 / TMC 1543 / L948) (Mycobacterium abscessus).